The chain runs to 177 residues: Nucleoside triphosphate/diphosphate phosphatase (177 aa).

Residue Arg23 is the Proton donor of the active site. Mg(2+) contacts are provided by Asn87, Asp103, Asp105, Asp107, Asp120, and Glu123.

This sequence belongs to the Ntdp family. Mg(2+) is required as a cofactor.

It catalyses the reaction a ribonucleoside 5'-triphosphate + H2O = a ribonucleoside 5'-diphosphate + phosphate + H(+). The enzyme catalyses a ribonucleoside 5'-diphosphate + H2O = a ribonucleoside 5'-phosphate + phosphate + H(+). Functionally, has nucleoside phosphatase activity towards nucleoside triphosphates and nucleoside diphosphates. The protein is Nucleoside triphosphate/diphosphate phosphatase of Streptococcus suis (strain 98HAH33).